The chain runs to 232 residues: Probable dihydroorotate dehydrogenase B (NAD(+)), electron transfer subunit (232 aa).

The FAD-binding FR-type domain maps to 1 to 86; the sequence is MYYTRITQIE…RGAFGSAFTP (86 aa). [2Fe-2S] cluster is bound by residues cysteine 202, cysteine 207, cysteine 210, and cysteine 219.

This sequence belongs to the PyrK family. Heterotetramer of 2 PyrK and 2 PyrD type B subunits. [2Fe-2S] cluster is required as a cofactor. The cofactor is FAD.

Its pathway is pyrimidine metabolism; UMP biosynthesis via de novo pathway; orotate from (S)-dihydroorotate (NAD(+) route): step 1/1. In terms of biological role, responsible for channeling the electrons from the oxidation of dihydroorotate from the FMN redox center in the PyrD type B subunit to the ultimate electron acceptor NAD(+). In Archaeoglobus fulgidus (strain ATCC 49558 / DSM 4304 / JCM 9628 / NBRC 100126 / VC-16), this protein is Probable dihydroorotate dehydrogenase B (NAD(+)), electron transfer subunit.